A 315-amino-acid chain; its full sequence is 31 kDa ribonucleoprotein, chloroplastic (315 aa).

The transit peptide at Met-1–Ser-71 directs the protein to the chloroplast. The interval Ala-114–Pro-133 is disordered. Residues Gly-115 to Pro-133 show a composition bias toward acidic residues. 2 RRM domains span residues Ala-136 to Arg-214 and Tyr-230 to Asp-308.

The protein localises to the plastid. It localises to the chloroplast. Could be involved in splicing and/or processing of chloroplast RNA's. The protein is 31 kDa ribonucleoprotein, chloroplastic of Nicotiana sylvestris (Wood tobacco).